Consider the following 231-residue polypeptide: Ribosomal RNA small subunit methyltransferase G (231 aa).

S-adenosyl-L-methionine contacts are provided by Gly-85, Phe-90, and Arg-154.

This sequence belongs to the methyltransferase superfamily. RNA methyltransferase RsmG family.

The protein localises to the cytoplasm. The catalysed reaction is guanosine(527) in 16S rRNA + S-adenosyl-L-methionine = N(7)-methylguanosine(527) in 16S rRNA + S-adenosyl-L-homocysteine. In terms of biological role, specifically methylates the N7 position of guanine in position 527 of 16S rRNA. The polypeptide is Ribosomal RNA small subunit methyltransferase G (Rhodopseudomonas palustris (strain BisA53)).